The chain runs to 242 residues: Cysteine-rich venom protein VAR11 (242 aa).

The signal sequence occupies residues 1-19 (MILLKLYLTLAAILCQSRG). The region spanning 41–169 (NKHNDLRRTV…SLKYFQVCQY (129 aa)) is the SCP domain. Cystine bridges form between cysteine 77–cysteine 156, cysteine 95–cysteine 170, cysteine 151–cysteine 167, cysteine 189–cysteine 196, cysteine 192–cysteine 201, cysteine 205–cysteine 237, cysteine 214–cysteine 231, and cysteine 223–cysteine 235. One can recognise a ShKT domain in the interval 205-237 (CAYNDDYTSCPDLTKQVGCNHPVTANCKASCQC).

The protein belongs to the CRISP family. As to expression, expressed by the venom gland.

It is found in the secreted. Blocks ryanodine receptors, and potassium channels. This Varanus varius (Lace monitor lizard) protein is Cysteine-rich venom protein VAR11.